The following is a 340-amino-acid chain: MRVYYDRDCDVNLIKDKKVAILGYGSQGHAHALNLRDSGAKNLVVALREGSASAKKAEAEGLQVMGIAEAAAWCDLIMFTMPDELQAETYKKYVHDNIREGAAIAFAHGLNVHFGLIEPKAGVDVIMMAPKGPGHTVRGEYTKGGGVPCLVAVDTDATGRALEIGLSYCSAIGGGRSGIIETNFREECETDLFGEQAVLCGGLVELIRMGFETLVEAGYAPEMAYFECLHEVKLIVDLIYEGGIANMNYSISNTAEYGEYVSGPRVLPYDETKARMKAILTDIQTGKFVRDFMQENTVGQPFFKGTRRLNDEHQIEAVGKELRGMMPWISAGKLVDQEKN.

Positions 1–182 (MRVYYDRDCD…GGGRSGIIET (182 aa)) constitute a KARI N-terminal Rossmann domain. Residues 24 to 27 (YGSQ), Arg48, Ser51, Ser53, and 83 to 86 (DELQ) contribute to the NADP(+) site. Residue His108 is part of the active site. Gly134 contributes to the NADP(+) binding site. In terms of domain architecture, KARI C-terminal knotted spans 183–329 (NFREECETDL…KELRGMMPWI (147 aa)). 4 residues coordinate Mg(2+): Asp191, Glu195, Glu227, and Glu231. Ser252 serves as a coordination point for substrate.

The protein belongs to the ketol-acid reductoisomerase family. Mg(2+) is required as a cofactor.

The enzyme catalyses (2R)-2,3-dihydroxy-3-methylbutanoate + NADP(+) = (2S)-2-acetolactate + NADPH + H(+). It carries out the reaction (2R,3R)-2,3-dihydroxy-3-methylpentanoate + NADP(+) = (S)-2-ethyl-2-hydroxy-3-oxobutanoate + NADPH + H(+). The protein operates within amino-acid biosynthesis; L-isoleucine biosynthesis; L-isoleucine from 2-oxobutanoate: step 2/4. Its pathway is amino-acid biosynthesis; L-valine biosynthesis; L-valine from pyruvate: step 2/4. Its function is as follows. Involved in the biosynthesis of branched-chain amino acids (BCAA). Catalyzes an alkyl-migration followed by a ketol-acid reduction of (S)-2-acetolactate (S2AL) to yield (R)-2,3-dihydroxy-isovalerate. In the isomerase reaction, S2AL is rearranged via a Mg-dependent methyl migration to produce 3-hydroxy-3-methyl-2-ketobutyrate (HMKB). In the reductase reaction, this 2-ketoacid undergoes a metal-dependent reduction by NADPH to yield (R)-2,3-dihydroxy-isovalerate. In Dinoroseobacter shibae (strain DSM 16493 / NCIMB 14021 / DFL 12), this protein is Ketol-acid reductoisomerase (NADP(+)).